Reading from the N-terminus, the 341-residue chain is GDT1-like protein 1, chloroplastic (341 aa).

The segment covering 1–13 has biased composition (low complexity); sequence MASVASSTVFASS. 2 disordered regions span residues 1–41 and 54–76; these read MASV…GRSV and VVTR…GGGR. The transit peptide at 1–57 directs the protein to the chloroplast; sequence MASVASSTVFASSLPHHRATTRAPPTPPRIPRRARLPGRSVVSCLPKRGSEKLVVTR. 7 helical membrane passes run 79–99, 117–137, 158–178, 203–223, 246–266, 286–306, and 318–338; these read PSLD…VLML, VVGD…LIFF, AIIF…SVVL, FLAA…AASG, GAGI…VFIA, LGVI…AVLG, and IVAY…LVEI.

It belongs to the GDT1 family.

The protein localises to the plastid. The protein resides in the chloroplast membrane. The chain is GDT1-like protein 1, chloroplastic from Oryza sativa subsp. japonica (Rice).